Here is a 418-residue protein sequence, read N- to C-terminus: Histidine--tRNA ligase (418 aa).

Belongs to the class-II aminoacyl-tRNA synthetase family.

The protein resides in the cytoplasm. It carries out the reaction tRNA(His) + L-histidine + ATP = L-histidyl-tRNA(His) + AMP + diphosphate + H(+). This chain is Histidine--tRNA ligase, found in Methanococcus maripaludis (strain C6 / ATCC BAA-1332).